We begin with the raw amino-acid sequence, 374 residues long: Chaperone protein DnaJ (374 aa).

One can recognise a J domain in the interval 5–70; it reads DYYEILEIER…GKRQLYDRYG (66 aa). The segment at 136-213 adopts a CR-type zinc-finger fold; it reads GCKKEIKIRY…CNGKGHENKE (78 aa). The Zn(2+) site is built by C149, C152, C165, C168, C187, C190, C201, and C204. CXXCXGXG motif repeat units lie at residues 149–156, 165–172, 187–194, and 201–208; these read CPDCKGTG, CPDCGGRG, CPKCGGSG, and CPKCNGKG.

It belongs to the DnaJ family. Homodimer. Requires Zn(2+) as cofactor.

The protein localises to the cytoplasm. In terms of biological role, participates actively in the response to hyperosmotic and heat shock by preventing the aggregation of stress-denatured proteins and by disaggregating proteins, also in an autonomous, DnaK-independent fashion. Unfolded proteins bind initially to DnaJ; upon interaction with the DnaJ-bound protein, DnaK hydrolyzes its bound ATP, resulting in the formation of a stable complex. GrpE releases ADP from DnaK; ATP binding to DnaK triggers the release of the substrate protein, thus completing the reaction cycle. Several rounds of ATP-dependent interactions between DnaJ, DnaK and GrpE are required for fully efficient folding. Also involved, together with DnaK and GrpE, in the DNA replication of plasmids through activation of initiation proteins. This is Chaperone protein DnaJ from Wolinella succinogenes (strain ATCC 29543 / DSM 1740 / CCUG 13145 / JCM 31913 / LMG 7466 / NCTC 11488 / FDC 602W) (Vibrio succinogenes).